We begin with the raw amino-acid sequence, 244 residues long: Orotidine 5'-phosphate decarboxylase (244 aa).

Substrate-binding positions include aspartate 14, lysine 36, 63-72, threonine 127, arginine 188, glutamine 197, glycine 217, and arginine 218; that span reads DLKFHDIPNT. Residue lysine 65 is the Proton donor of the active site.

It belongs to the OMP decarboxylase family. Type 1 subfamily. As to quaternary structure, homodimer.

It carries out the reaction orotidine 5'-phosphate + H(+) = UMP + CO2. It participates in pyrimidine metabolism; UMP biosynthesis via de novo pathway; UMP from orotate: step 2/2. Catalyzes the decarboxylation of orotidine 5'-monophosphate (OMP) to uridine 5'-monophosphate (UMP). This is Orotidine 5'-phosphate decarboxylase from Syntrophotalea carbinolica (strain DSM 2380 / NBRC 103641 / GraBd1) (Pelobacter carbinolicus).